The primary structure comprises 116 residues: Large ribosomal subunit protein uL18 (116 aa).

This sequence belongs to the universal ribosomal protein uL18 family. In terms of assembly, part of the 50S ribosomal subunit; part of the 5S rRNA/L5/L18/L25 subcomplex. Contacts the 5S and 23S rRNAs.

Its function is as follows. This is one of the proteins that bind and probably mediate the attachment of the 5S RNA into the large ribosomal subunit, where it forms part of the central protuberance. This Pseudomonas fluorescens (strain SBW25) protein is Large ribosomal subunit protein uL18.